Reading from the N-terminus, the 701-residue chain is Elongation factor G (701 aa).

In terms of domain architecture, tr-type G spans 10-290 (AKVRNIGIMA…AVVDYLPSPL (281 aa)). GTP is bound by residues 19 to 26 (AHIDAGKT), 83 to 87 (DTPGH), and 137 to 140 (NKMD).

It belongs to the TRAFAC class translation factor GTPase superfamily. Classic translation factor GTPase family. EF-G/EF-2 subfamily.

It is found in the cytoplasm. Catalyzes the GTP-dependent ribosomal translocation step during translation elongation. During this step, the ribosome changes from the pre-translocational (PRE) to the post-translocational (POST) state as the newly formed A-site-bound peptidyl-tRNA and P-site-bound deacylated tRNA move to the P and E sites, respectively. Catalyzes the coordinated movement of the two tRNA molecules, the mRNA and conformational changes in the ribosome. The protein is Elongation factor G of Tropheryma whipplei (strain TW08/27) (Whipple's bacillus).